Here is a 234-residue protein sequence, read N- to C-terminus: Leucyl/phenylalanyl-tRNA--protein transferase (234 aa).

Belongs to the L/F-transferase family.

Its subcellular location is the cytoplasm. It carries out the reaction N-terminal L-lysyl-[protein] + L-leucyl-tRNA(Leu) = N-terminal L-leucyl-L-lysyl-[protein] + tRNA(Leu) + H(+). It catalyses the reaction N-terminal L-arginyl-[protein] + L-leucyl-tRNA(Leu) = N-terminal L-leucyl-L-arginyl-[protein] + tRNA(Leu) + H(+). The catalysed reaction is L-phenylalanyl-tRNA(Phe) + an N-terminal L-alpha-aminoacyl-[protein] = an N-terminal L-phenylalanyl-L-alpha-aminoacyl-[protein] + tRNA(Phe). In terms of biological role, functions in the N-end rule pathway of protein degradation where it conjugates Leu, Phe and, less efficiently, Met from aminoacyl-tRNAs to the N-termini of proteins containing an N-terminal arginine or lysine. This is Leucyl/phenylalanyl-tRNA--protein transferase from Escherichia coli O7:K1 (strain IAI39 / ExPEC).